The primary structure comprises 360 residues: Arginase, non-hepatic 2 (360 aa).

Positions 122, 145, 147, and 149 each coordinate Mn(2+). Residues 147–151, 158–160, and D204 each bind substrate; these read HADIN and SGN. Mn(2+) is bound by residues D253 and D255. Residues T267 and E298 each contribute to the substrate site.

It belongs to the arginase family. As to quaternary structure, homotrimer. It depends on Mn(2+) as a cofactor. As to expression, expressed at differing tadpole stages in tail, intestine, hindlimb and trunk region. Strongest in tadpole tail.

It catalyses the reaction L-arginine + H2O = urea + L-ornithine. Its pathway is nitrogen metabolism; urea cycle; L-ornithine and urea from L-arginine: step 1/1. Functionally, as well as its role in the urea cycle, may be involved in tissue remodeling. This Xenopus laevis (African clawed frog) protein is Arginase, non-hepatic 2 (arg2-b).